Reading from the N-terminus, the 269-residue chain is 3-deoxy-manno-octulosonate cytidylyltransferase (269 aa).

It belongs to the KdsB family.

It localises to the cytoplasm. It carries out the reaction 3-deoxy-alpha-D-manno-oct-2-ulosonate + CTP = CMP-3-deoxy-beta-D-manno-octulosonate + diphosphate. It functions in the pathway nucleotide-sugar biosynthesis; CMP-3-deoxy-D-manno-octulosonate biosynthesis; CMP-3-deoxy-D-manno-octulosonate from 3-deoxy-D-manno-octulosonate and CTP: step 1/1. It participates in bacterial outer membrane biogenesis; lipopolysaccharide biosynthesis. Its function is as follows. Activates KDO (a required 8-carbon sugar) for incorporation into bacterial lipopolysaccharide in Gram-negative bacteria. In Cupriavidus necator (strain ATCC 17699 / DSM 428 / KCTC 22496 / NCIMB 10442 / H16 / Stanier 337) (Ralstonia eutropha), this protein is 3-deoxy-manno-octulosonate cytidylyltransferase.